The chain runs to 285 residues: Aspartate/glutamate leucyltransferase (285 aa).

Belongs to the R-transferase family. Bpt subfamily.

The protein localises to the cytoplasm. It catalyses the reaction N-terminal L-glutamyl-[protein] + L-leucyl-tRNA(Leu) = N-terminal L-leucyl-L-glutamyl-[protein] + tRNA(Leu) + H(+). The catalysed reaction is N-terminal L-aspartyl-[protein] + L-leucyl-tRNA(Leu) = N-terminal L-leucyl-L-aspartyl-[protein] + tRNA(Leu) + H(+). Functionally, functions in the N-end rule pathway of protein degradation where it conjugates Leu from its aminoacyl-tRNA to the N-termini of proteins containing an N-terminal aspartate or glutamate. The chain is Aspartate/glutamate leucyltransferase from Dinoroseobacter shibae (strain DSM 16493 / NCIMB 14021 / DFL 12).